Here is a 312-residue protein sequence, read N- to C-terminus: Olfactory receptor 2H2 (312 aa).

Residues 1 to 23 lie on the Extracellular side of the membrane; sequence MVNQSSTPGFLLLGFSEHPGLER. Asn3 carries N-linked (GlcNAc...) asparagine glycosylation. A helical membrane pass occupies residues 24 to 47; it reads TLFVVVLTSYLLTLVGNTLIILLS. Residues 48 to 55 are Cytoplasmic-facing; that stretch reads ALDPKLHS. The chain crosses the membrane as a helical span at residues 56-77; that stretch reads PMYFFLSNLSFLDLCFTTSCVP. Over 78-98 the chain is Extracellular; it reads QMLVNLWGPKKTISFLDCSVQ. Residues Cys95 and Cys187 are joined by a disulfide bond. A helical membrane pass occupies residues 99 to 118; it reads IFIFLSLGTTECILLTVMAF. At 119–137 the chain is on the cytoplasmic side; sequence DRYVAVCQPLHYATIIHPR. Residues 138–156 traverse the membrane as a helical segment; it reads LCWQLASVAWVIGLVESVV. Topologically, residues 157–193 are extracellular; the sequence is QTPSTLHLPFCPDRQVDDFVCEVPALIRLSCEDTSYN. Residues 194–217 form a helical membrane-spanning segment; the sequence is EIQVAVASVFILVVPLSLILVSYG. Residues 218 to 234 are Cytoplasmic-facing; that stretch reads AITWAVLRINSAKGRRK. A helical transmembrane segment spans residues 235–257; sequence AFGTCSSHLTVVTLFYSSVIAVY. Residues 258–270 lie on the Extracellular side of the membrane; that stretch reads LQPKNPYAQERGK. Residues 271–290 form a helical membrane-spanning segment; sequence FFGLFYAVGTPSLNPLIYTL. Residues 291–312 lie on the Cytoplasmic side of the membrane; sequence RNKEVTRAFRRLLGKEMGLTQS.

Belongs to the G-protein coupled receptor 1 family.

The protein resides in the cell membrane. In terms of biological role, odorant receptor. The polypeptide is Olfactory receptor 2H2 (OR2H2) (Homo sapiens (Human)).